Reading from the N-terminus, the 522-residue chain is uncharacterized protein (522 aa).

This is an uncharacterized protein from Sinorhizobium fredii (strain NBRC 101917 / NGR234).